The primary structure comprises 200 residues: Holliday junction branch migration complex subunit RuvA (200 aa).

Residues 1–64 (MLSYLSGTLI…EDALQLYGFI (64 aa)) form a domain I region. Positions 65–143 (TTEDREVFKL…KLDLKIDIKE (79 aa)) are domain II. A flexible linker region spans residues 144 to 148 (TAFRS). The domain III stretch occupies residues 149–200 (DKQQVRNDAYSALISLGFTKSIAEKAMRAAIAEVPDGSVDDLIRVALRHVQS).

The protein belongs to the RuvA family. As to quaternary structure, homotetramer. Forms an RuvA(8)-RuvB(12)-Holliday junction (HJ) complex. HJ DNA is sandwiched between 2 RuvA tetramers; dsDNA enters through RuvA and exits via RuvB. An RuvB hexamer assembles on each DNA strand where it exits the tetramer. Each RuvB hexamer is contacted by two RuvA subunits (via domain III) on 2 adjacent RuvB subunits; this complex drives branch migration. In the full resolvosome a probable DNA-RuvA(4)-RuvB(12)-RuvC(2) complex forms which resolves the HJ.

It is found in the cytoplasm. In terms of biological role, the RuvA-RuvB-RuvC complex processes Holliday junction (HJ) DNA during genetic recombination and DNA repair, while the RuvA-RuvB complex plays an important role in the rescue of blocked DNA replication forks via replication fork reversal (RFR). RuvA specifically binds to HJ cruciform DNA, conferring on it an open structure. The RuvB hexamer acts as an ATP-dependent pump, pulling dsDNA into and through the RuvAB complex. HJ branch migration allows RuvC to scan DNA until it finds its consensus sequence, where it cleaves and resolves the cruciform DNA. The sequence is that of Holliday junction branch migration complex subunit RuvA from Chloroherpeton thalassium (strain ATCC 35110 / GB-78).